A 76-amino-acid chain; its full sequence is ATP synthase subunit 9, mitochondrial (76 aa).

The next 2 helical transmembrane spans lie at isoleucine 14 to isoleucine 34 and isoleucine 52 to leucine 72.

The protein belongs to the ATPase C chain family. In terms of assembly, F-type ATPases have 2 components, CF(1) - the catalytic core - and CF(0) - the membrane proton channel. CF(1) has five subunits: alpha(3), beta(3), gamma(1), delta(1), epsilon(1). CF(0) has three main subunits: a, b and c.

It localises to the mitochondrion membrane. Functionally, mitochondrial membrane ATP synthase (F(1)F(0) ATP synthase or Complex V) produces ATP from ADP in the presence of a proton gradient across the membrane which is generated by electron transport complexes of the respiratory chain. F-type ATPases consist of two structural domains, F(1) - containing the extramembraneous catalytic core and F(0) - containing the membrane proton channel, linked together by a central stalk and a peripheral stalk. During catalysis, ATP synthesis in the catalytic domain of F(1) is coupled via a rotary mechanism of the central stalk subunits to proton translocation. Part of the complex F(0) domain. A homomeric c-ring of probably 10 subunits is part of the complex rotary element. In Wickerhamomyces canadensis (Yeast), this protein is ATP synthase subunit 9, mitochondrial (ATP9).